Here is a 464-residue protein sequence, read N- to C-terminus: Pup--protein ligase (464 aa).

Glutamate 14 is a binding site for Mg(2+). Arginine 58 contributes to the ATP binding site. Tyrosine 60 contributes to the Mg(2+) binding site. Catalysis depends on aspartate 62, which acts as the Proton acceptor. Glutamate 68 provides a ligand contact to Mg(2+). ATP is bound by residues threonine 71 and tryptophan 430.

This sequence belongs to the Pup ligase/Pup deamidase family. Pup-conjugating enzyme subfamily.

It catalyses the reaction ATP + [prokaryotic ubiquitin-like protein]-L-glutamate + [protein]-L-lysine = ADP + phosphate + N(6)-([prokaryotic ubiquitin-like protein]-gamma-L-glutamyl)-[protein]-L-lysine.. It functions in the pathway protein degradation; proteasomal Pup-dependent pathway. It participates in protein modification; protein pupylation. In terms of biological role, catalyzes the covalent attachment of the prokaryotic ubiquitin-like protein modifier Pup to the proteasomal substrate proteins, thereby targeting them for proteasomal degradation. This tagging system is termed pupylation. The ligation reaction involves the side-chain carboxylate of the C-terminal glutamate of Pup and the side-chain amino group of a substrate lysine. This is Pup--protein ligase from Micrococcus luteus (strain ATCC 4698 / DSM 20030 / JCM 1464 / CCM 169 / CCUG 5858 / IAM 1056 / NBRC 3333 / NCIMB 9278 / NCTC 2665 / VKM Ac-2230) (Micrococcus lysodeikticus).